Reading from the N-terminus, the 354-residue chain is Cysteine proteinase 1 (354 aa).

The signal sequence occupies residues Met-1–Ala-24. The propeptide at Leu-25 to Ser-125 is activation peptide. Disulfide bonds link Cys-150/Cys-191, Cys-184/Cys-229, and Cys-282/Cys-330. Residue Cys-153 is part of the active site. A glycan (N-linked (GlcNAc...) asparagine) is linked at Asn-208. Catalysis depends on residues His-289 and Asn-309.

It belongs to the peptidase C1 family.

Its function is as follows. The cysteine proteinases have a potential role in host-parasite interaction and virulence. This is Cysteine proteinase 1 (CYS1) from Leishmania pifanoi.